The following is a 333-amino-acid chain: Atrochrysone carboxyl ACP thioesterase (333 aa).

4 residues coordinate Zn(2+): His-104, His-106, Asp-108, and His-109. The active-site Proton donor/acceptor is Asp-108.

This sequence belongs to the metallo-beta-lactamase superfamily. Zn(2+) serves as cofactor.

It catalyses the reaction atrochrysone carboxyl-[ACP] + H2O = atrochrysone carboxylate + holo-[ACP] + H(+). It participates in pigment biosynthesis. In terms of biological role, atrochrysone carboxyl ACP thioesterase; part of the gene cluster that mediates the biosynthesis of the bianthraquinone cladofulvin, a conidial pigment not required for virulence but that plays a role in fitness and resistance to environmental stresses including UV light and low-temperature stress. The pathway begins with the synthesis of atrochrysone thioester by the polyketide synthase (PKS) claG. The atrochrysone carboxyl ACP thioesterase claF then breaks the thioester bond and releases the atrochrysone carboxylic acid from claG. This compound is decarboxylated by claH to yield emodin, which is further converted to chrysophanol hydroquinone by the reductase claC and the dehydratase claB. The cytochrome P450 monooxygenase claM then catalyzes the dimerization of nataloe-emodin to cladofulvin. In Passalora fulva (Tomato leaf mold), this protein is Atrochrysone carboxyl ACP thioesterase.